The sequence spans 82 residues: ATP synthase subunit c (82 aa).

2 helical membrane passes run L6–I26 and I49–V69.

It belongs to the ATPase C chain family. F-type ATPases have 2 components, F(1) - the catalytic core - and F(0) - the membrane proton channel. F(1) has five subunits: alpha(3), beta(3), gamma(1), delta(1), epsilon(1). F(0) has three main subunits: a(1), b(2) and c(10-14). The alpha and beta chains form an alternating ring which encloses part of the gamma chain. F(1) is attached to F(0) by a central stalk formed by the gamma and epsilon chains, while a peripheral stalk is formed by the delta and b chains.

The protein resides in the cell inner membrane. In terms of biological role, f(1)F(0) ATP synthase produces ATP from ADP in the presence of a proton or sodium gradient. F-type ATPases consist of two structural domains, F(1) containing the extramembraneous catalytic core and F(0) containing the membrane proton channel, linked together by a central stalk and a peripheral stalk. During catalysis, ATP synthesis in the catalytic domain of F(1) is coupled via a rotary mechanism of the central stalk subunits to proton translocation. Its function is as follows. Key component of the F(0) channel; it plays a direct role in translocation across the membrane. A homomeric c-ring of between 10-14 subunits forms the central stalk rotor element with the F(1) delta and epsilon subunits. This chain is ATP synthase subunit c, found in Nitratidesulfovibrio vulgaris (strain ATCC 29579 / DSM 644 / CCUG 34227 / NCIMB 8303 / VKM B-1760 / Hildenborough) (Desulfovibrio vulgaris).